We begin with the raw amino-acid sequence, 253 residues long: Ubiquinone biosynthesis O-methyltransferase (253 aa).

Positions 47, 78, 99, and 141 each coordinate S-adenosyl-L-methionine.

It belongs to the methyltransferase superfamily. UbiG/COQ3 family.

It carries out the reaction a 3-demethylubiquinol + S-adenosyl-L-methionine = a ubiquinol + S-adenosyl-L-homocysteine + H(+). The enzyme catalyses a 3-(all-trans-polyprenyl)benzene-1,2-diol + S-adenosyl-L-methionine = a 2-methoxy-6-(all-trans-polyprenyl)phenol + S-adenosyl-L-homocysteine + H(+). The protein operates within cofactor biosynthesis; ubiquinone biosynthesis. Its function is as follows. O-methyltransferase that catalyzes the 2 O-methylation steps in the ubiquinone biosynthetic pathway. This is Ubiquinone biosynthesis O-methyltransferase from Bradyrhizobium diazoefficiens (strain JCM 10833 / BCRC 13528 / IAM 13628 / NBRC 14792 / USDA 110).